A 257-amino-acid polypeptide reads, in one-letter code: Large ribosomal subunit protein uL2 (257 aa).

The tract at residues 210–231 (PHGGGNHQHIGKASTVKRGTSA) is disordered.

This sequence belongs to the universal ribosomal protein uL2 family.

The protein localises to the cytoplasm. This is Large ribosomal subunit protein uL2 (RpL8) from Mamestra brassicae (Cabbage moth).